Reading from the N-terminus, the 405-residue chain is Phosphopentomutase (405 aa).

Asp-10, Asp-305, His-310, Asp-346, His-347, and His-358 together coordinate Mn(2+).

It belongs to the phosphopentomutase family. Requires Mn(2+) as cofactor.

Its subcellular location is the cytoplasm. The enzyme catalyses 2-deoxy-alpha-D-ribose 1-phosphate = 2-deoxy-D-ribose 5-phosphate. It catalyses the reaction alpha-D-ribose 1-phosphate = D-ribose 5-phosphate. The protein operates within carbohydrate degradation; 2-deoxy-D-ribose 1-phosphate degradation; D-glyceraldehyde 3-phosphate and acetaldehyde from 2-deoxy-alpha-D-ribose 1-phosphate: step 1/2. Its function is as follows. Isomerase that catalyzes the conversion of deoxy-ribose 1-phosphate (dRib-1-P) and ribose 1-phosphate (Rib-1-P) to deoxy-ribose 5-phosphate (dRib-5-P) and ribose 5-phosphate (Rib-5-P), respectively. The protein is Phosphopentomutase of Methylobacterium sp. (strain 4-46).